Here is a 428-residue protein sequence, read N- to C-terminus: MLDPKFLRNELAVTAERLATRGFILDVAHLTQLEEKRKSLQVATEELQASRNAISKSIGQAKARGEDVDAIMAQVGDLGAQLDAKKVELAAVLEEVNAIAMSMPNLPDESAPIGADETENVEIRRWGTPRSFDFPVKDHIDLGEGLNGLDFKSAVKITGSRFIVMKGQIARLNRALGQFMLDLHTTEHGYTEAYVPLLVNEASLLGTGQLPKFGEDLFHTKPATEEGQGLSLIPTAEVPLTNLVRDSIVDEDELPIKLTAHTACFRSEAGSYGKDTRGLIRQHQFDKVELVQLVKPEDSMAALEALTGHAETVLQRLGLPYRTVILCTGDMGFGSSKTYDIEVWLPGQNTYREISSCSNMKDFQARRMQARYRVKADNKPALLHTLNGSGLAVGRTLVAILENYQNADGSVTIPEALRPYMGGLTQIG.

Residue 235-237 (TAE) participates in L-serine binding. 266 to 268 (RSE) is an ATP binding site. Residue E289 coordinates L-serine. 353 to 356 (EISS) contacts ATP. L-serine is bound at residue S389.

The protein belongs to the class-II aminoacyl-tRNA synthetase family. Type-1 seryl-tRNA synthetase subfamily. In terms of assembly, homodimer. The tRNA molecule binds across the dimer.

The protein resides in the cytoplasm. The catalysed reaction is tRNA(Ser) + L-serine + ATP = L-seryl-tRNA(Ser) + AMP + diphosphate + H(+). It catalyses the reaction tRNA(Sec) + L-serine + ATP = L-seryl-tRNA(Sec) + AMP + diphosphate + H(+). It functions in the pathway aminoacyl-tRNA biosynthesis; selenocysteinyl-tRNA(Sec) biosynthesis; L-seryl-tRNA(Sec) from L-serine and tRNA(Sec): step 1/1. Functionally, catalyzes the attachment of serine to tRNA(Ser). Is also able to aminoacylate tRNA(Sec) with serine, to form the misacylated tRNA L-seryl-tRNA(Sec), which will be further converted into selenocysteinyl-tRNA(Sec). This Shewanella sp. (strain ANA-3) protein is Serine--tRNA ligase.